Here is a 136-residue protein sequence, read N- to C-terminus: 5-hydroxyisourate hydrolase (136 aa).

The signal sequence occupies residues 1–20; that stretch reads MKRYILATAIASLVAAPAMA. Substrate-binding residues include H31, R69, and Y133.

This sequence belongs to the transthyretin family. 5-hydroxyisourate hydrolase subfamily. Homotetramer.

It is found in the periplasm. The enzyme catalyses 5-hydroxyisourate + H2O = 5-hydroxy-2-oxo-4-ureido-2,5-dihydro-1H-imidazole-5-carboxylate + H(+). Functionally, catalyzes the hydrolysis of 5-hydroxyisourate (HIU) to 2-oxo-4-hydroxy-4-carboxy-5-ureidoimidazoline (OHCU). The polypeptide is 5-hydroxyisourate hydrolase (hiuH) (Salmonella typhi).